Reading from the N-terminus, the 129-residue chain is uncharacterized protein (129 aa).

This is an uncharacterized protein from Sinorhizobium fredii (strain NBRC 101917 / NGR234).